The primary structure comprises 219 residues: MARSKSSEKWLKEHFKDPFVQRAMKEGYRSRASYKLLEIQQKDHLIRPGMRVLDVGAAPGGWTQVAAPLIGRKGRLVAVDRLAMDPVADATVICGDVYDDAILAACQEALPGGADLIMSDMAPNMSGIASVDQARAIDLAELALDMAHRWLVPGGALLIKVFMGSGAEELRRALRRDFKKIVVRKPEASRARSTEQYWLALDFQGVAQERLDNGGASSL.

S-adenosyl-L-methionine-binding residues include Gly-60, Trp-62, Asp-80, Asp-96, and Asp-120. The active-site Proton acceptor is the Lys-160.

The protein belongs to the class I-like SAM-binding methyltransferase superfamily. RNA methyltransferase RlmE family.

It is found in the cytoplasm. The enzyme catalyses uridine(2552) in 23S rRNA + S-adenosyl-L-methionine = 2'-O-methyluridine(2552) in 23S rRNA + S-adenosyl-L-homocysteine + H(+). Specifically methylates the uridine in position 2552 of 23S rRNA at the 2'-O position of the ribose in the fully assembled 50S ribosomal subunit. This is Ribosomal RNA large subunit methyltransferase E from Acidithiobacillus ferrooxidans (strain ATCC 23270 / DSM 14882 / CIP 104768 / NCIMB 8455) (Ferrobacillus ferrooxidans (strain ATCC 23270)).